We begin with the raw amino-acid sequence, 205 residues long: High frequency lysogenization protein HflD homolog (205 aa).

This sequence belongs to the HflD family.

It is found in the cytoplasm. Its subcellular location is the cell inner membrane. In Haemophilus influenzae (strain 86-028NP), this protein is High frequency lysogenization protein HflD homolog.